The chain runs to 1070 residues: Phosphatidylinositol 4,5-bisphosphate 3-kinase catalytic subunit beta isoform (1070 aa).

Residues 26–115 (SDGSIPVDFL…LPVLKLVTRS (90 aa)) form the PI3K-ABD domain. One can recognise a PI3K-RBD domain in the interval 194–285 (GGKLIVAVHF…RALPHFILVE (92 aa)). The residue at position 324 (Ser-324) is a Phosphoserine. One can recognise a C2 PI3K-type domain in the interval 327–496 (WENNNPFQIV…NATALHVKFP (170 aa)). Residues 410–418 (KVKTKKSTK) carry the Nuclear localization signal motif. The PIK helical domain occupies 524–701 (ANVSSRGGKK…GVILEAYCRG (178 aa)). The 282-residue stretch at 772–1053 (YVEKCKYMDS…KFDEALRESW (282 aa)) folds into the PI3K/PI4K catalytic domain. The interval 778–784 (YMDSKMK) is G-loop. The tract at residues 916-924 (GIGDRHSDN) is catalytic loop. An activation loop region spans residues 935–961 (HIDFGHILGNFKSKFGIKRERVPFILT). At Ser-1070 the chain carries Phosphoserine; by autocatalysis.

The protein belongs to the PI3/PI4-kinase family. Heterodimer of a catalytic subunit PIK3CB and a p85 regulatory subunit (PIK3R1, PIK3R2 or PIK3R3). Interaction with PIK3R2 is required for nuclear localization and nuclear export. Part of a complex with PIK3R1 and PTEN. Binding to PTEN may antagonize the lipid kinase activity under normal growth conditions. Part of a complex involved in autophagosome formation composed of PIK3C3 and PIK3R4. Interacts with BECN1, ATG14 and RAB5A. In terms of processing, autophosphorylation at Ser-1070 negatively regulates the phosphatidylinositol-4,5-bisphosphate 3-kinase activity. In terms of tissue distribution, expressed ubiquitously.

Its subcellular location is the cytoplasm. It localises to the nucleus. The catalysed reaction is a 1,2-diacyl-sn-glycero-3-phospho-(1D-myo-inositol-4,5-bisphosphate) + ATP = a 1,2-diacyl-sn-glycero-3-phospho-(1D-myo-inositol-3,4,5-trisphosphate) + ADP + H(+). The enzyme catalyses 1-octadecanoyl-2-(5Z,8Z,11Z,14Z)-eicosatetraenoyl-sn-glycero-3-phospho-1D-myo-inositol 4,5-bisphosphate + ATP = 1-octadecanoyl-2-(5Z,8Z,11Z,14Z-eicosatetraenoyl)-sn-glycero-3-phospho-(1D-myo-inositol 3,4,5-triphosphate) + ADP + H(+). It carries out the reaction L-seryl-[protein] + ATP = O-phospho-L-seryl-[protein] + ADP + H(+). It functions in the pathway phospholipid metabolism; phosphatidylinositol phosphate biosynthesis. Its function is as follows. Phosphoinositide-3-kinase (PI3K) phosphorylates phosphatidylinositol derivatives at position 3 of the inositol ring to produce 3-phosphoinositides. Uses ATP and PtdIns(4,5)P2 (phosphatidylinositol 4,5-bisphosphate) to generate phosphatidylinositol 3,4,5-trisphosphate (PIP3). PIP3 plays a key role by recruiting PH domain-containing proteins to the membrane, including AKT1 and PDPK1, activating signaling cascades involved in cell growth, survival, proliferation, motility and morphology. Involved in the activation of AKT1 upon stimulation by G-protein coupled receptors (GPCRs) ligands such as CXCL12, sphingosine 1-phosphate, and lysophosphatidic acid. May also act downstream receptor tyrosine kinases. Required in different signaling pathways for stable platelet adhesion and aggregation. Plays a role in platelet activation signaling triggered by GPCRs, alpha-IIb/beta-3 integrins (ITGA2B/ ITGB3) and ITAM (immunoreceptor tyrosine-based activation motif)-bearing receptors such as GP6. Regulates the strength of adhesion of ITGA2B/ ITGB3 activated receptors necessary for the cellular transmission of contractile forces. Required for platelet aggregation induced by F2 (thrombin) and thromboxane A2 (TXA2). Has a role in cell survival. May have a role in cell migration. Involved in the early stage of autophagosome formation. Modulates the intracellular level of PtdIns3P (phosphatidylinositol 3-phosphate) and activates PIK3C3 kinase activity. May act as a scaffold, independently of its lipid kinase activity to positively regulate autophagy. May have a role in insulin signaling as scaffolding protein in which the lipid kinase activity is not required. May have a kinase-independent function in regulating cell proliferation and in clathrin-mediated endocytosis. Mediator of oncogenic signal in cell lines lacking PTEN. The lipid kinase activity is necessary for its role in oncogenic transformation. Required for the growth of ERBB2 and RAS driven tumors. Also has a protein kinase activity showing autophosphorylation. The chain is Phosphatidylinositol 4,5-bisphosphate 3-kinase catalytic subunit beta isoform (PIK3CB) from Homo sapiens (Human).